A 499-amino-acid polypeptide reads, in one-letter code: BTB/POZ domain-containing protein At5g60050 (499 aa).

Positions 18–30 (PSLSFSPSRISSP) are enriched in low complexity. Residues 18 to 57 (PSLSFSPSRISSPIKLSTASPPLPPPPPPPPNESTLSNPT) are disordered. Residues 38-49 (PPLPPPPPPPPN) show a composition bias toward pro residues. The 74-residue stretch at 99 to 172 (GDVKLTVVGK…MYSDDLKKKL (74 aa)) folds into the BTB domain.

It participates in protein modification; protein ubiquitination. May act as a substrate-specific adapter of an E3 ubiquitin-protein ligase complex (CUL3-RBX1-BTB) which mediates the ubiquitination and subsequent proteasomal degradation of target proteins. The protein is BTB/POZ domain-containing protein At5g60050 of Arabidopsis thaliana (Mouse-ear cress).